A 156-amino-acid polypeptide reads, in one-letter code: Small ribosomal subunit protein uS7 (156 aa).

Belongs to the universal ribosomal protein uS7 family. As to quaternary structure, part of the 30S ribosomal subunit. Contacts proteins S9 and S11.

Functionally, one of the primary rRNA binding proteins, it binds directly to 16S rRNA where it nucleates assembly of the head domain of the 30S subunit. Is located at the subunit interface close to the decoding center, probably blocks exit of the E-site tRNA. The polypeptide is Small ribosomal subunit protein uS7 (Clostridium botulinum (strain 657 / Type Ba4)).